The sequence spans 401 residues: MPSFKTLDDLSDIRGKRVLVRVDLNVPVKDGKVTDVTRIERVAPTILELSEKGAKVILLAHFGRPKDGPSSDLSLSLIAPSVEEVLDHAVLTASDCIGEAAASAVAAMNDGDILLLENTRFHKGEENNDSDFTKALAANGDIYVNDAFSAAHRAHASTEGLAHHLPAYAGRTMQAELEALEKGLGDPARPVVAIVGGAKVSTKIDLLMNLVKKVDALVIGGGMANTFIAARGTNVGKSLCEHDLAETAKQIMIEAATAGCAIILPEDGVIAREFKAGAANETVDINAIPADAMVLDVGPKSVEAINAWIERAATLVWNGPLGAFEIGPFDAATVAAAKYAAGRTIAGKLTSVAGGGDTVSALNHAGVADDFTYVSTAGGAFLEWMEGKELPGVAVLNAAAA.

Substrate contacts are provided by residues 23 to 25, Arg38, 61 to 64, Arg120, and Arg153; these read DLN and HFGR. ATP-binding positions include Lys203, Glu325, and 355-358; that span reads GGDT.

The protein belongs to the phosphoglycerate kinase family. Monomer.

The protein localises to the cytoplasm. The catalysed reaction is (2R)-3-phosphoglycerate + ATP = (2R)-3-phospho-glyceroyl phosphate + ADP. It participates in carbohydrate degradation; glycolysis; pyruvate from D-glyceraldehyde 3-phosphate: step 2/5. The sequence is that of Phosphoglycerate kinase from Rhizobium johnstonii (strain DSM 114642 / LMG 32736 / 3841) (Rhizobium leguminosarum bv. viciae).